Consider the following 414-residue polypeptide: Serine hydroxymethyltransferase (414 aa).

(6S)-5,6,7,8-tetrahydrofolate-binding positions include leucine 121 and glycine 125–leucine 127. Lysine 229 is modified (N6-(pyridoxal phosphate)lysine).

It belongs to the SHMT family. In terms of assembly, homodimer. Pyridoxal 5'-phosphate serves as cofactor.

It is found in the cytoplasm. The catalysed reaction is (6R)-5,10-methylene-5,6,7,8-tetrahydrofolate + glycine + H2O = (6S)-5,6,7,8-tetrahydrofolate + L-serine. It participates in one-carbon metabolism; tetrahydrofolate interconversion. It functions in the pathway amino-acid biosynthesis; glycine biosynthesis; glycine from L-serine: step 1/1. Its function is as follows. Catalyzes the reversible interconversion of serine and glycine with tetrahydrofolate (THF) serving as the one-carbon carrier. This reaction serves as the major source of one-carbon groups required for the biosynthesis of purines, thymidylate, methionine, and other important biomolecules. Also exhibits THF-independent aldolase activity toward beta-hydroxyamino acids, producing glycine and aldehydes, via a retro-aldol mechanism. This Acidovorax ebreus (strain TPSY) (Diaphorobacter sp. (strain TPSY)) protein is Serine hydroxymethyltransferase.